The primary structure comprises 484 residues: Deoxyribodipyrimidine photo-lyase (484 aa).

One can recognise a Photolyase/cryptochrome alpha/beta domain in the interval 3–132 (APILFWHRRD…RAVQLWDQLL (130 aa)). Coenzyme F420-(gamma-Glu)n-binding positions include 36 to 38 (CLD), Arg51, and 101 to 109 (DIEPYGRDR). Residues 141-148 (GSGNPYSV) form a DNA-binding region. Tyr228 is a binding site for FAD. Arg232 serves as a coordination point for DNA. 240-247 (TSGLSPAL) contributes to the FAD binding site. Lys248 serves as a coordination point for coenzyme F420-(gamma-Glu)n. Interaction with DNA regions lie at residues 283–290 (ELAWREFY) and 349–350 (NR). FAD-binding positions include 346–352 (WMHNRCW), 380–382 (DGD), and Asn386. Positions 411 and 472 each coordinate DNA.

It belongs to the DNA photolyase class-1 family. In terms of assembly, monomer. The cofactor is FAD. Coenzyme F420-(gamma-Glu)n serves as cofactor.

The enzyme catalyses cyclobutadipyrimidine (in DNA) = 2 pyrimidine residues (in DNA).. Involved in repair of UV radiation-induced DNA damage. Catalyzes the light-dependent monomerization (300-600 nm) of cyclobutyl pyrimidine dimers (in cis-syn configuration), which are formed between adjacent bases on the same DNA strand upon exposure to ultraviolet radiation. This Synechococcus sp. (strain ATCC 27144 / PCC 6301 / SAUG 1402/1) (Anacystis nidulans) protein is Deoxyribodipyrimidine photo-lyase (phr).